A 144-amino-acid polypeptide reads, in one-letter code: Protein MIX23 (144 aa).

A2 carries the N-acetylalanine modification. The stretch at 82–120 (VKNLREEREKNLDDLTLLKQLRKEQTKLKWMQSELNVEE) forms a coiled coil. K100 is subject to N6-acetyllysine.

The protein belongs to the MIX23 family.

This is Protein MIX23 from Homo sapiens (Human).